Consider the following 334-residue polypeptide: Holliday junction branch migration complex subunit RuvB (334 aa).

Positions 1 to 181 are large ATPase domain (RuvB-L); sequence MSEFLTPERT…GIILELDFYT (181 aa). The ADP site is built by Leu-19 and Arg-20. Glu-26, Phe-27, and Ile-28 together coordinate ATP. Positions 27, 28, 61, 62, 63, 64, 65, and 66 each coordinate ADP. Positions 62 and 63 each coordinate ATP. ATP contacts are provided by residues 127-129 and Arg-170; that span reads EDF. Tyr-180, Pro-216, and Arg-217 together coordinate ADP. Positions 182-255 are small ATPAse domain (RuvB-S); that stretch reads VKELKEIIKR…TMEVLNIDDE (74 aa). Pro-216 lines the ATP pocket. The tract at residues 256–334 is head domain (RuvB-H); sequence GLDEFDRKIL…KYEVPENRLF (79 aa). 2 residues coordinate DNA: Arg-309 and Arg-314.

Belongs to the RuvB family. In terms of assembly, homohexamer. Forms an RuvA(8)-RuvB(12)-Holliday junction (HJ) complex. HJ DNA is sandwiched between 2 RuvA tetramers; dsDNA enters through RuvA and exits via RuvB. An RuvB hexamer assembles on each DNA strand where it exits the tetramer. Each RuvB hexamer is contacted by two RuvA subunits (via domain III) on 2 adjacent RuvB subunits; this complex drives branch migration. In the full resolvosome a probable DNA-RuvA(4)-RuvB(12)-RuvC(2) complex forms which resolves the HJ.

It is found in the cytoplasm. The enzyme catalyses ATP + H2O = ADP + phosphate + H(+). Functionally, the RuvA-RuvB-RuvC complex processes Holliday junction (HJ) DNA during genetic recombination and DNA repair, while the RuvA-RuvB complex plays an important role in the rescue of blocked DNA replication forks via replication fork reversal (RFR). RuvA specifically binds to HJ cruciform DNA, conferring on it an open structure. The RuvB hexamer acts as an ATP-dependent pump, pulling dsDNA into and through the RuvAB complex. RuvB forms 2 homohexamers on either side of HJ DNA bound by 1 or 2 RuvA tetramers; 4 subunits per hexamer contact DNA at a time. Coordinated motions by a converter formed by DNA-disengaged RuvB subunits stimulates ATP hydrolysis and nucleotide exchange. Immobilization of the converter enables RuvB to convert the ATP-contained energy into a lever motion, pulling 2 nucleotides of DNA out of the RuvA tetramer per ATP hydrolyzed, thus driving DNA branch migration. The RuvB motors rotate together with the DNA substrate, which together with the progressing nucleotide cycle form the mechanistic basis for DNA recombination by continuous HJ branch migration. Branch migration allows RuvC to scan DNA until it finds its consensus sequence, where it cleaves and resolves cruciform DNA. Promotes Holliday junction (HJ) branch migration in conjunction with RuvA. Subunits can be free, ADP- or ATP-bound; nucleotide binding changes during the reaction cycle. Has a DNA-dependent ATPase activity; dsDNA and supercoiled DNA but not ssDNA stimulate activity. The protein is Holliday junction branch migration complex subunit RuvB of Thermotoga maritima (strain ATCC 43589 / DSM 3109 / JCM 10099 / NBRC 100826 / MSB8).